The following is a 552-amino-acid chain: Protein psiB (552 aa).

An N-terminal signal peptide occupies residues 1–18 (MKLLSVLITFLLATVIYS). An N-linked (GlcNAc...) asparagine glycan is attached at N60. One can recognise a PA14 domain in the interval 114-255 (TYDTTRNIYV…EDYCGVCQGD (142 aa)). N-linked (GlcNAc...) asparagine glycosylation is found at N281, N313, N340, N365, N446, N472, and N521.

This sequence belongs to the prespore-cell-inducing factor family.

It is found in the secreted. The sequence is that of Protein psiB (psiB) from Dictyostelium discoideum (Social amoeba).